Here is a 311-residue protein sequence, read N- to C-terminus: Ribosomal RNA small subunit methyltransferase H 1 (311 aa).

S-adenosyl-L-methionine contacts are provided by residues 33-35 (AGH), D53, F80, D101, and Q108.

The protein belongs to the methyltransferase superfamily. RsmH family.

Its subcellular location is the cytoplasm. It catalyses the reaction cytidine(1402) in 16S rRNA + S-adenosyl-L-methionine = N(4)-methylcytidine(1402) in 16S rRNA + S-adenosyl-L-homocysteine + H(+). Specifically methylates the N4 position of cytidine in position 1402 (C1402) of 16S rRNA. In Alkaliphilus metalliredigens (strain QYMF), this protein is Ribosomal RNA small subunit methyltransferase H 1.